Consider the following 185-residue polypeptide: Ribosome-recycling factor (185 aa).

The protein belongs to the RRF family.

It localises to the cytoplasm. Its function is as follows. Responsible for the release of ribosomes from messenger RNA at the termination of protein biosynthesis. May increase the efficiency of translation by recycling ribosomes from one round of translation to another. The protein is Ribosome-recycling factor of Bacillus mycoides (strain KBAB4) (Bacillus weihenstephanensis).